The following is a 271-amino-acid chain: Monalysin (271 aa).

A propeptide spanning residues 1–33 is cleaved from the precursor; that stretch reads MTIKEELGQPQSHSIELDEVSKEAASTRAALTS. The pore-forming domain stretch occupies residues 102–170; sequence IPQNVTTTLS…FTDTTEMKGP (69 aa).

In terms of assembly, pro-Monalysin forms a stable donut-like 18-mer complex composed of two disk-shaped nonamers held together by N-terminal swapping of the pro-peptides. After proteolytic cleavage, the inactive 18-mer complex probably dissociates into two disk-shaped active nonamers in which the transmembrane segments are unmasked and ready to engage the conformational change leading to the pore formation into the target membrane. Multimerizes into circular-like structures and barrel-like aggregates. Requires N-terminal cleavage to become fully active. The metalloprotease AprA can induce the rapid cleavage of pro-Monalysin into its active form. Can also be processed by trypsin.

The protein localises to the secreted. The protein resides in the host cell membrane. Its function is as follows. Pore-forming toxin that contributes to the virulence of P.entomophila against Drosophila, playing an important role in host intestinal damage and lethality. Displays cytolytic and hemolytic activity. The sequence is that of Monalysin from Pseudomonas entomophila (strain L48).